Reading from the N-terminus, the 359-residue chain is MSWAHTPTLTQYLIEERRRYPQASGDFNALILDMARACKAIARQVAYGALAKSNHAVTTTINVQGEEQKPLDVISNECFMRLTEWGGYLAAMASEEMDEPYLIPEQYPRGRYLLLFDPLDGSSNIDVNVSVGSIFSVLRAPEGKTEITVDDFLQPGTQQVAAGYAIYGPTTMLVLTVGRGVVGFTLDPDFGEFMLTHPNIRIPESTKEFAINTSNARFWEPPVKRYVDECLKGKTGPRGKDFNMRWVASLVAETHRILSRGGVFLYPRDNKEPKKPGRLRLLYECNPIGMIVEQAGGRASTGYGPVLEVQPTELHQRIGFVFGSREEVERIEQYHNDPDASPVDLPLFAERTLFRDETL.

Mg(2+)-binding residues include E95, D117, L119, and D120. Substrate-binding positions include 120–123 (DGSS) and N212. E284 contacts Mg(2+).

It belongs to the FBPase class 1 family. As to quaternary structure, homotetramer. Mg(2+) is required as a cofactor.

It is found in the cytoplasm. It catalyses the reaction beta-D-fructose 1,6-bisphosphate + H2O = beta-D-fructose 6-phosphate + phosphate. It participates in carbohydrate biosynthesis; gluconeogenesis. The sequence is that of Fructose-1,6-bisphosphatase class 1 from Hydrogenophilus thermoluteolus (Pseudomonas hydrogenothermophila).